Here is a 357-residue protein sequence, read N- to C-terminus: Protein phosphatase 1 regulatory subunit 42 (357 aa).

LRR repeat units lie at residues 29–50 (KITH…SLCR), 51–72 (NLSV…NYTT), 73–94 (NLTH…SSLK), 95–116 (KLEK…EGLE), 117–138 (ELRE…LFDP), 147–168 (SLST…EILE), and 169–190 (NLNH…ELLL). An LRRCT domain is found at 204–242 (NPVCLKPKYRDKLILTSKSLEFLDGKEIKDMERQFLMNW). The tract at residues 329 to 357 (ESSLTKNDIHEPHLLQNPKVKENLSEKKE) is disordered. The segment covering 335-357 (NDIHEPHLLQNPKVKENLSEKKE) has biased composition (basic and acidic residues).

As to quaternary structure, interacts with PPP1CC isoform gamma-2; the interaction is direct. Interacts with actin, dynein, KIF5B, KIFC1 and tubulin. Associates with microtubules. Phosphorylated; during the first round of spermatogenesis with a marginal increase at 21 days after birth. As to expression, testis-specific. Expressed in spermatids (at protein level). Testis-specific.

It is found in the cytoplasm. The protein localises to the cytoskeleton. It localises to the microtubule organizing center. The protein resides in the centrosome. In terms of biological role, regulates phosphatase activity of protein phosphatase 1 (PP1) complexes in the testis. This Mus musculus (Mouse) protein is Protein phosphatase 1 regulatory subunit 42 (Ppp1r42).